Reading from the N-terminus, the 440-residue chain is Tryptophan synthase beta chain (440 aa).

Lys110 is modified (N6-(pyridoxal phosphate)lysine).

The protein belongs to the TrpB family. As to quaternary structure, tetramer of two alpha and two beta chains. Pyridoxal 5'-phosphate is required as a cofactor.

It carries out the reaction (1S,2R)-1-C-(indol-3-yl)glycerol 3-phosphate + L-serine = D-glyceraldehyde 3-phosphate + L-tryptophan + H2O. It participates in amino-acid biosynthesis; L-tryptophan biosynthesis; L-tryptophan from chorismate: step 5/5. Functionally, the beta subunit is responsible for the synthesis of L-tryptophan from indole and L-serine. In Thermococcus gammatolerans (strain DSM 15229 / JCM 11827 / EJ3), this protein is Tryptophan synthase beta chain.